Reading from the N-terminus, the 69-residue chain is Conotoxin Eb6.22 (69 aa).

Residues 1 to 17 form the signal peptide; the sequence is VLIIAVLFLTACQLTTA. Residues 18–41 constitute a propeptide that is removed on maturation; it reads ETYSRGRQKHRARRSTDKNSKWTR. Disulfide bonds link Cys-43/Cys-57, Cys-50/Cys-61, and Cys-56/Cys-68.

This sequence belongs to the conotoxin O1 superfamily. As to expression, expressed by the venom duct.

The protein resides in the secreted. The protein is Conotoxin Eb6.22 (E1) of Conus ebraeus (Hebrew cone).